The following is a 640-amino-acid chain: Threonine--tRNA ligase (640 aa).

The 60-residue stretch at 1–60 (MKITFPDGAVKEFEPGVSTADIAASISPGLKKKALAGKLNGELLDLVTPIHEDGAIEIVT) folds into the TGS domain. The segment at 241-538 (DHRKLGKELE…LIEEYKGAFP (298 aa)) is catalytic. Residues cysteine 334, histidine 385, and histidine 515 each contribute to the Zn(2+) site.

Belongs to the class-II aminoacyl-tRNA synthetase family. Homodimer. The cofactor is Zn(2+).

Its subcellular location is the cytoplasm. It carries out the reaction tRNA(Thr) + L-threonine + ATP = L-threonyl-tRNA(Thr) + AMP + diphosphate + H(+). Catalyzes the attachment of threonine to tRNA(Thr) in a two-step reaction: L-threonine is first activated by ATP to form Thr-AMP and then transferred to the acceptor end of tRNA(Thr). Also edits incorrectly charged L-seryl-tRNA(Thr). The protein is Threonine--tRNA ligase of Listeria monocytogenes serovar 1/2a (strain ATCC BAA-679 / EGD-e).